The primary structure comprises 153 residues: Histone H2B.10 (153 aa).

Composition is skewed to basic and acidic residues over residues 1-28 (MAPK…EKAP) and 36-53 (EKRL…EGKK). A disordered region spans residues 1 to 61 (MAPKAEKKPA…KKAGRKKAKK (61 aa)). N6-acetyllysine occurs at positions 7 and 37. Lysine 149 is covalently cross-linked (Glycyl lysine isopeptide (Lys-Gly) (interchain with G-Cter in ubiquitin)).

The protein belongs to the histone H2B family. As to quaternary structure, the nucleosome is a histone octamer containing two molecules each of H2A, H2B, H3 and H4 assembled in one H3-H4 heterotetramer and two H2A-H2B heterodimers. The octamer wraps approximately 147 bp of DNA. Can be acetylated to form H2BK6ac and H2BK33ac. Post-translationally, monoubiquitinated by BRE1 to form H2BK143ub1 and deubiquitinated by UBP26. Required for heterochromatic histone H3 di- and trimethylation at H3K4me. May give a specific tag for epigenetic transcriptional activation.

Its subcellular location is the nucleus. The protein resides in the chromosome. Core component of nucleosome. Nucleosomes wrap and compact DNA into chromatin, limiting DNA accessibility to the cellular machineries which require DNA as a template. Histones thereby play a central role in transcription regulation, DNA repair, DNA replication and chromosomal stability. DNA accessibility is regulated via a complex set of post-translational modifications of histones, also called histone code, and nucleosome remodeling. This Oryza sativa subsp. indica (Rice) protein is Histone H2B.10 (H2B.10).